The sequence spans 462 residues: Argininosuccinate lyase (462 aa).

Belongs to the lyase 1 family. Argininosuccinate lyase subfamily.

It localises to the cytoplasm. It carries out the reaction 2-(N(omega)-L-arginino)succinate = fumarate + L-arginine. It functions in the pathway amino-acid biosynthesis; L-arginine biosynthesis; L-arginine from L-ornithine and carbamoyl phosphate: step 3/3. In Pelagibacter ubique (strain HTCC1062), this protein is Argininosuccinate lyase.